The sequence spans 104 residues: Large ribosomal subunit protein uL24 (104 aa).

It belongs to the universal ribosomal protein uL24 family. Part of the 50S ribosomal subunit.

In terms of biological role, one of two assembly initiator proteins, it binds directly to the 5'-end of the 23S rRNA, where it nucleates assembly of the 50S subunit. Functionally, one of the proteins that surrounds the polypeptide exit tunnel on the outside of the subunit. The chain is Large ribosomal subunit protein uL24 from Mesorhizobium japonicum (strain LMG 29417 / CECT 9101 / MAFF 303099) (Mesorhizobium loti (strain MAFF 303099)).